Here is a 237-residue protein sequence, read N- to C-terminus: MDNGDWGYMMTDPVTLNVGGHLYTTSLTTLTRYPDSMLGAMFGGDFPTARDPQGNYFIDRDGPLFRYVLNFLRTSELTLPLDFKEFDLLRKEADFYQIEPLIQCLNDPKPLYPMDTFEEVVELSSTRKLSKYSNPVAVIITQLTITTKVHSLLEGISNYFTKWNKHMMDTRDCQVSFTFGPCDYHQEVSLRVHLMEYITKQGFTIRNTRVHHMSERANENTVEHNWTFCRLARKTDD.

The tract at residues 1–104 (MDNGDWGYMM…FYQIEPLIQC (104 aa)) is interaction with ANK1 isoform Mu17. The interval 10–110 (MTDPVTLNVG…LIQCLNDPKP (101 aa)) is interaction with CUL3. Positions 12-81 (DPVTLNVGGH…LRTSELTLPL (70 aa)) constitute a BTB domain. Positions 113-187 (PMDTFEEVVE…TFGPCDYHQE (75 aa)) are interaction with USP21.

Homopentamer. Interacts with KCTD11; KCTD6 and KCTD11 may associate in pentameric assemblies. Interacts (via BTB domain) with CUL3; initially a 4:4 stoichiometry has been reported, however, electron microscopy revealed pentameric states with a five-pointed pinwheel shape. The interaction with CUL3 is indicative for a participation in a BCR (BTB-CUL3-RBX1) E3 ubiquitin-protein ligase complex. Interacts with HDAC1; probably indirect as the interaction is requires the presence of KCTD11. Interacts with USP21 (preferentially catalytic inactive form). Interacts with ANK1 isoform Mu17; detected in striated muscle. Interacts with USP11. Highly expressed in cerebellum and brain. Expression is down-regulated in medulloblastoma.

The protein localises to the cytoplasm. Its subcellular location is the myofibril. It is found in the sarcomere. It localises to the m line. It participates in protein modification; protein ubiquitination. Probable substrate-specific adapter of a BCR (BTB-CUL3-RBX1) E3 ubiquitin-protein ligase complex mediating the ubiquitination and subsequent proteasomal degradation of target proteins. Promotes the ubiquitination of HDAC1; the function seems to depend on KCTD11:KCTD6 oligomerization. Can function as antagonist of the Hedgehog pathway by affecting the nuclear transfer of transcription factor GLI1; the function probably occurs via HDAC1 down-regulation, keeping GLI1 acetylated and inactive. Inhibits cell growth and tumorigenicity of medulloblastoma (MDB). Involved in regulating protein levels of ANK1 isoform Mu17 probably implicating CUL3-dependent proteasomal degradation. The sequence is that of BTB/POZ domain-containing protein KCTD6 (KCTD6) from Homo sapiens (Human).